Consider the following 245-residue polypeptide: Orotidine 5'-phosphate decarboxylase (245 aa).

Residues aspartate 22, lysine 44, 71-80 (DLKFHDIPNT), threonine 131, arginine 192, glutamine 201, glycine 221, and arginine 222 contribute to the substrate site. The active-site Proton donor is the lysine 73.

This sequence belongs to the OMP decarboxylase family. Type 1 subfamily. As to quaternary structure, homodimer.

The catalysed reaction is orotidine 5'-phosphate + H(+) = UMP + CO2. It participates in pyrimidine metabolism; UMP biosynthesis via de novo pathway; UMP from orotate: step 2/2. Functionally, catalyzes the decarboxylation of orotidine 5'-monophosphate (OMP) to uridine 5'-monophosphate (UMP). The protein is Orotidine 5'-phosphate decarboxylase of Escherichia coli (strain K12 / MC4100 / BW2952).